A 179-amino-acid polypeptide reads, in one-letter code: ATP-dependent protease subunit HslV (179 aa).

The active site involves Thr5. Na(+) is bound by residues Cys164 and Thr167.

It belongs to the peptidase T1B family. HslV subfamily. In terms of assembly, a double ring-shaped homohexamer of HslV is capped on each side by a ring-shaped HslU homohexamer. The assembly of the HslU/HslV complex is dependent on binding of ATP.

It localises to the cytoplasm. It catalyses the reaction ATP-dependent cleavage of peptide bonds with broad specificity.. Its activity is regulated as follows. Allosterically activated by HslU binding. Its function is as follows. Protease subunit of a proteasome-like degradation complex believed to be a general protein degrading machinery. This Carboxydothermus hydrogenoformans (strain ATCC BAA-161 / DSM 6008 / Z-2901) protein is ATP-dependent protease subunit HslV.